The sequence spans 890 residues: DNA mismatch repair protein MutS (890 aa).

Gly-607–Ser-614 is an ATP binding site.

It belongs to the DNA mismatch repair MutS family.

Its function is as follows. This protein is involved in the repair of mismatches in DNA. It is possible that it carries out the mismatch recognition step. This protein has a weak ATPase activity. The sequence is that of DNA mismatch repair protein MutS from Bacillus thuringiensis subsp. konkukian (strain 97-27).